Here is a 169-residue protein sequence, read N- to C-terminus: Transmembrane protein B169L (169 aa).

Transmembrane regions (helical) follow at residues 28-48 and 60-80; these read NPFI…FAIC and TAIY…YVLN. The N-linked (GlcNAc...) asparagine; by host glycan is linked to asparagine 88. The disordered stretch occupies residues 107–169; that stretch reads DEIIPPISPP…EVIMPSQYNN (63 aa). Residues 144-154 are compositionally biased toward low complexity; sequence SKPASSADSKP.

Belongs to the asfivirus B169L family.

It localises to the host membrane. It is found in the virion. This Ornithodoros (relapsing fever ticks) protein is Transmembrane protein B169L.